Here is a 460-residue protein sequence, read N- to C-terminus: Probable fibrosin-1 (460 aa).

A Glycyl lysine isopeptide (Lys-Gly) (interchain with G-Cter in SUMO2) cross-link involves residue lysine 8. Disordered regions lie at residues 40–79 (SLQG…FRPP), 205–311 (FAQK…KEEA), and 406–460 (YSRL…RADR). The segment covering 212–223 (GAPPAFASPPDP) has biased composition (pro residues). Residues arginine 229 and arginine 239 each carry the asymmetric dimethylarginine modification. Basic and acidic residues predominate over residues 248 to 272 (GSDKERPVERREPSITKEEKDRDLP). Serine 281 is subject to Phosphoserine. Positions 288-311 (RAGEEGPRPTKESVRVKEERKEEA) are enriched in basic and acidic residues. The segment covering 436–453 (APPPLVPAPRPSSPPRGP) has biased composition (pro residues).

The protein is Probable fibrosin-1 (FBRS) of Homo sapiens (Human).